Consider the following 219-residue polypeptide: Deoxyribose-phosphate aldolase (219 aa).

Residue Asp92 is the Proton donor/acceptor of the active site. Lys154 acts as the Schiff-base intermediate with acetaldehyde in catalysis. The active-site Proton donor/acceptor is the Lys183.

It belongs to the DeoC/FbaB aldolase family. DeoC type 1 subfamily.

The protein resides in the cytoplasm. It carries out the reaction 2-deoxy-D-ribose 5-phosphate = D-glyceraldehyde 3-phosphate + acetaldehyde. It participates in carbohydrate degradation; 2-deoxy-D-ribose 1-phosphate degradation; D-glyceraldehyde 3-phosphate and acetaldehyde from 2-deoxy-alpha-D-ribose 1-phosphate: step 2/2. Functionally, catalyzes a reversible aldol reaction between acetaldehyde and D-glyceraldehyde 3-phosphate to generate 2-deoxy-D-ribose 5-phosphate. This Dictyoglomus turgidum (strain DSM 6724 / Z-1310) protein is Deoxyribose-phosphate aldolase.